We begin with the raw amino-acid sequence, 233 residues long: Protein FAM204A (233 aa).

Residues 1-126 (MWSGLLPPGL…HSEPSSNETQ (126 aa)) form a disordered region. The span at 13–24 (SDAESNSEDEAT) shows a compositional bias: acidic residues. Over residues 39–58 (ESIRKTEIIDFSTDEPKTET) the composition is skewed to basic and acidic residues. The span at 97–109 (FRGKRRKRSRKDK) shows a compositional bias: basic residues. Residues 144–164 (VKRKKVEKSGLEKRIDQAVEE) adopt a coiled-coil conformation.

This is Protein FAM204A (FAM204A) from Homo sapiens (Human).